The primary structure comprises 240 residues: MNRDEARKKIIFALDVNGIAEIDRYAGLLSDRVGMFKIGKELFTACGPEAVATVRRHGGQVFLDLKYHDIPNTVAKAMLEAARLGVQLANLHALGGLEMMETAASAVRREFGDDRPRLLAVTILTSSTAETLRRVGIDHPVEEMVVRLACLAREAGMDGVVASPREIGLIRQACGPDFLIVTPGVRPSFASQDDQKRIMSPDDAVREGADYLVIGRPIAKADDPVRAVDMIVDEIVAGCP.

Residues Asp15, Lys37, 64 to 73, Thr125, Arg186, Gln195, Gly215, and Arg216 each bind substrate; that span reads DLKYHDIPNT. Lys66 serves as the catalytic Proton donor.

This sequence belongs to the OMP decarboxylase family. Type 1 subfamily. In terms of assembly, homodimer.

The enzyme catalyses orotidine 5'-phosphate + H(+) = UMP + CO2. Its pathway is pyrimidine metabolism; UMP biosynthesis via de novo pathway; UMP from orotate: step 2/2. In terms of biological role, catalyzes the decarboxylation of orotidine 5'-monophosphate (OMP) to uridine 5'-monophosphate (UMP). This Pelobacter propionicus (strain DSM 2379 / NBRC 103807 / OttBd1) protein is Orotidine 5'-phosphate decarboxylase.